A 130-amino-acid chain; its full sequence is uncharacterized protein (130 aa).

An N-terminal signal peptide occupies residues M1 to A26. N58 carries an N-linked (GlcNAc...) asparagine glycan.

It belongs to the Dictyostelium gerABC family.

The protein resides in the secreted. This is an uncharacterized protein from Dictyostelium discoideum (Social amoeba).